The following is a 218-amino-acid chain: Adenylate kinase (218 aa).

10–15 (GAGKGT) provides a ligand contact to ATP. Positions 30–59 (STGDMLRAAVKAGTPLGQQAKAVMESGGLV) are NMP. Residues threonine 31, arginine 36, 57-59 (GLV), 85-88 (GFPR), and glutamine 92 each bind AMP. The tract at residues 122–159 (GRRSHPASGRTYHVKFNPPKVEGKDDITGEDLIQRKDD) is LID. ATP is bound by residues arginine 123 and 132–133 (TY). Residues arginine 156 and arginine 167 each coordinate AMP. Position 203 (glycine 203) interacts with ATP.

The protein belongs to the adenylate kinase family. As to quaternary structure, monomer.

It localises to the cytoplasm. The catalysed reaction is AMP + ATP = 2 ADP. It participates in purine metabolism; AMP biosynthesis via salvage pathway; AMP from ADP: step 1/1. In terms of biological role, catalyzes the reversible transfer of the terminal phosphate group between ATP and AMP. Plays an important role in cellular energy homeostasis and in adenine nucleotide metabolism. The polypeptide is Adenylate kinase (Variovorax paradoxus (strain S110)).